The chain runs to 578 residues: Membrane protein insertase YidC (578 aa).

The helical transmembrane segment at 7 to 27 (FLAIAISLGILLGFQGLYRHF) threads the bilayer. Residues 35-70 (ARTATNAGQGKPNNTLGAVPTDATASQSPPPKEGAR) form a disordered region. A compositionally biased stretch (polar residues) spans 37 to 50 (TATNAGQGKPNNTL). 4 consecutive transmembrane segments (helical) span residues 362 to 382 (LVGN…AAFY), 436 to 456 (LPML…FVTI), 491 to 511 (HISP…TMYL), and 530 to 550 (FMPI…VIYW).

This sequence belongs to the OXA1/ALB3/YidC family. Type 1 subfamily. Interacts with the Sec translocase complex via SecD. Specifically interacts with transmembrane segments of nascent integral membrane proteins during membrane integration.

It is found in the cell inner membrane. Required for the insertion and/or proper folding and/or complex formation of integral membrane proteins into the membrane. Involved in integration of membrane proteins that insert both dependently and independently of the Sec translocase complex, as well as at least some lipoproteins. Aids folding of multispanning membrane proteins. The polypeptide is Membrane protein insertase YidC (Granulibacter bethesdensis (strain ATCC BAA-1260 / CGDNIH1)).